Consider the following 449-residue polypeptide: Tubulin beta-7 chain (449 aa).

GTP-binding residues include Gln11, Glu69, Ser138, Gly142, Thr143, Gly144, Asn204, and Asn226. Glu69 lines the Mg(2+) pocket. The tract at residues 422 to 449 is disordered; sequence YQQYQDATADEEGEYEEEEAEYEQEETY. Residues 429-449 show a composition bias toward acidic residues; sequence TADEEGEYEEEEAEYEQEETY.

Belongs to the tubulin family. Dimer of alpha and beta chains. A typical microtubule is a hollow water-filled tube with an outer diameter of 25 nm and an inner diameter of 15 nM. Alpha-beta heterodimers associate head-to-tail to form protofilaments running lengthwise along the microtubule wall with the beta-tubulin subunit facing the microtubule plus end conferring a structural polarity. Microtubules usually have 13 protofilaments but different protofilament numbers can be found in some organisms and specialized cells. Mg(2+) serves as cofactor.

It is found in the cytoplasm. The protein localises to the cytoskeleton. Tubulin is the major constituent of microtubules, a cylinder consisting of laterally associated linear protofilaments composed of alpha- and beta-tubulin heterodimers. Microtubules grow by the addition of GTP-tubulin dimers to the microtubule end, where a stabilizing cap forms. Below the cap, tubulin dimers are in GDP-bound state, owing to GTPase activity of alpha-tubulin. The sequence is that of Tubulin beta-7 chain (TUBB7) from Arabidopsis thaliana (Mouse-ear cress).